Consider the following 238-residue polypeptide: Pyridoxine 5'-phosphate synthase (238 aa).

Residues asparagine 7 and arginine 18 each coordinate 3-amino-2-oxopropyl phosphate. Catalysis depends on histidine 43, which acts as the Proton acceptor. Positions 45 and 50 each coordinate 1-deoxy-D-xylulose 5-phosphate. Glutamate 70 (proton acceptor) is an active-site residue. Threonine 100 contributes to the 1-deoxy-D-xylulose 5-phosphate binding site. Histidine 190 acts as the Proton donor in catalysis. 3-amino-2-oxopropyl phosphate-binding positions include aspartate 191 and 213-214 (GH).

The protein belongs to the PNP synthase family. Homooctamer; tetramer of dimers.

The protein localises to the cytoplasm. The catalysed reaction is 3-amino-2-oxopropyl phosphate + 1-deoxy-D-xylulose 5-phosphate = pyridoxine 5'-phosphate + phosphate + 2 H2O + H(+). Its pathway is cofactor biosynthesis; pyridoxine 5'-phosphate biosynthesis; pyridoxine 5'-phosphate from D-erythrose 4-phosphate: step 5/5. In terms of biological role, catalyzes the complicated ring closure reaction between the two acyclic compounds 1-deoxy-D-xylulose-5-phosphate (DXP) and 3-amino-2-oxopropyl phosphate (1-amino-acetone-3-phosphate or AAP) to form pyridoxine 5'-phosphate (PNP) and inorganic phosphate. In Parabacteroides distasonis (strain ATCC 8503 / DSM 20701 / CIP 104284 / JCM 5825 / NCTC 11152), this protein is Pyridoxine 5'-phosphate synthase.